The chain runs to 423 residues: Serine--tRNA ligase (423 aa).

T229 to E231 contributes to the L-serine binding site. R258–E260 contacts ATP. E281 is an L-serine binding site. E345–S348 is an ATP binding site. Position 379 (S379) interacts with L-serine.

The protein belongs to the class-II aminoacyl-tRNA synthetase family. Type-1 seryl-tRNA synthetase subfamily. As to quaternary structure, homodimer. The tRNA molecule binds across the dimer.

The protein resides in the cytoplasm. It catalyses the reaction tRNA(Ser) + L-serine + ATP = L-seryl-tRNA(Ser) + AMP + diphosphate + H(+). The enzyme catalyses tRNA(Sec) + L-serine + ATP = L-seryl-tRNA(Sec) + AMP + diphosphate + H(+). The protein operates within aminoacyl-tRNA biosynthesis; selenocysteinyl-tRNA(Sec) biosynthesis; L-seryl-tRNA(Sec) from L-serine and tRNA(Sec): step 1/1. Functionally, catalyzes the attachment of serine to tRNA(Ser). Is also able to aminoacylate tRNA(Sec) with serine, to form the misacylated tRNA L-seryl-tRNA(Sec), which will be further converted into selenocysteinyl-tRNA(Sec). The protein is Serine--tRNA ligase (serS1) of Methanosarcina barkeri (strain Fusaro / DSM 804).